Consider the following 407-residue polypeptide: Na(+)-translocating NADH-quinone reductase subunit F (407 aa).

The chain crosses the membrane as a helical span at residues 3–23 (ITLGIAMFTVIVLALAVLILF). The 95-residue stretch at 32 to 126 (GDITIEINDD…SMKIELPEEV (95 aa)) folds into the 2Fe-2S ferredoxin-type domain. [2Fe-2S] cluster is bound by residues C69, C75, C78, and C110. One can recognise an FAD-binding FR-type domain in the interval 129-269 (VKKWECTVIS…SGPFGEFFAK (141 aa)).

This sequence belongs to the NqrF family. As to quaternary structure, composed of six subunits; NqrA, NqrB, NqrC, NqrD, NqrE and NqrF. [2Fe-2S] cluster serves as cofactor. Requires FAD as cofactor.

The protein localises to the cell inner membrane. The enzyme catalyses a ubiquinone + n Na(+)(in) + NADH + H(+) = a ubiquinol + n Na(+)(out) + NAD(+). NQR complex catalyzes the reduction of ubiquinone-1 to ubiquinol by two successive reactions, coupled with the transport of Na(+) ions from the cytoplasm to the periplasm. The first step is catalyzed by NqrF, which accepts electrons from NADH and reduces ubiquinone-1 to ubisemiquinone by a one-electron transfer pathway. This is Na(+)-translocating NADH-quinone reductase subunit F from Histophilus somni (strain 129Pt) (Haemophilus somnus).